A 159-amino-acid polypeptide reads, in one-letter code: MVPATGQLALLALGILLAVCQALENSTSPLSDSPVAAAVVSHFNKCPDSHTQYCFHGTCRFLVQEEKPACVCHSGYVGVRCEHADLLAVVAASQKKQAITALVVVSIVALAVLIITCVLIHCCQLRKHCEWCRALVCRHEKPSALLKGRTACCHSETVV.

A signal peptide spans methionine 1–leucine 23. The propeptide at glutamate 24–alanine 38 is removed in mature form. The Extracellular portion of the chain corresponds to glutamate 24 to glutamine 97. N-linked (GlcNAc...) asparagine glycosylation occurs at asparagine 25. Residues asparagine 44–histidine 83 form the EGF-like domain. Cystine bridges form between cysteine 46–cysteine 59, cysteine 54–cysteine 70, and cysteine 72–cysteine 81. Residues valine 89 to valine 159 constitute a propeptide, removed in mature form. The chain crosses the membrane as a helical span at residues alanine 98 to cysteine 123. Residues glutamine 124 to valine 159 are Cytoplasmic-facing. Residues cysteine 152 and cysteine 153 are each lipidated (S-palmitoyl cysteine).

Interacts with the PDZ domains of SDCBP and SNTA1. The interaction with SDCBP, is required for the targeting to the cell surface. In the endoplasmic reticulum, in its immature form (i.e. with a prosegment and lacking full N-glycosylation), interacts with CNIH. In the Golgi apparatus, may form a complex with CNIH and GORASP2. Interacts (via cytoplasmic C-terminal domain) with NKD2. Interacts with MAGI3.

It localises to the secreted. The protein localises to the extracellular space. It is found in the cell membrane. TGF alpha is a mitogenic polypeptide that is able to bind to the EGF receptor/EGFR and to act synergistically with TGF beta to promote anchorage-independent cell proliferation in soft agar. This is Protransforming growth factor alpha (Tgfa) from Mus musculus (Mouse).